We begin with the raw amino-acid sequence, 484 residues long: BPI fold-containing family B member 1 (484 aa).

Positions 1 to 21 (MAGPWTFTLLCGLLAATLIQA) are cleaved as a signal peptide. Asn48 carries N-linked (GlcNAc...) asparagine glycosylation. Cysteines 158 and 201 form a disulfide. 2 N-linked (GlcNAc...) asparagine glycosylation sites follow: Asn264 and Asn401.

The protein belongs to the BPI/LBP/Plunc superfamily. Plunc family. As to expression, detected in duodenum mucosal crypts of cholera patients, near Paneth cells (at protein level). Detected in trachea, nasal septal epithelium and lung.

Its subcellular location is the secreted. In terms of biological role, may play a role in innate immunity in mouth, nose and lungs. Binds bacterial lipopolysaccharide (LPS) and modulates the cellular responses to LPS. The polypeptide is BPI fold-containing family B member 1 (BPIFB1) (Homo sapiens (Human)).